The primary structure comprises 371 residues: tRNA N6-adenosine threonylcarbamoyltransferase (371 aa).

Histidine 110 and histidine 114 together coordinate Fe cation. Substrate contacts are provided by residues 132–136 (LVSGG), aspartate 165, glycine 178, aspartate 182, and asparagine 289. Aspartate 317 is a binding site for Fe cation.

Belongs to the KAE1 / TsaD family. The cofactor is Fe(2+).

The protein localises to the cytoplasm. The enzyme catalyses L-threonylcarbamoyladenylate + adenosine(37) in tRNA = N(6)-L-threonylcarbamoyladenosine(37) in tRNA + AMP + H(+). Functionally, required for the formation of a threonylcarbamoyl group on adenosine at position 37 (t(6)A37) in tRNAs that read codons beginning with adenine. Is involved in the transfer of the threonylcarbamoyl moiety of threonylcarbamoyl-AMP (TC-AMP) to the N6 group of A37, together with TsaE and TsaB. TsaD likely plays a direct catalytic role in this reaction. This is tRNA N6-adenosine threonylcarbamoyltransferase from Solidesulfovibrio magneticus (strain ATCC 700980 / DSM 13731 / RS-1) (Desulfovibrio magneticus).